Reading from the N-terminus, the 881-residue chain is Rho GTPase-activating protein 17 (881 aa).

Positions 14–246 (QTVGRAEKTE…MRAHQDKWAE (233 aa)) constitute a BAR domain. The Rho-GAP domain maps to 252–442 (TPLEEHLKRS…PIIQHADWFF (191 aa)). Positions 459–475 (TPSSNHSFHTGNDSDSG) are enriched in polar residues. Residues 459–482 (TPSSNHSFHTGNDSDSGTLERKRP) form a disordered region. Residues Ser-484 and Ser-575 each carry the phosphoserine modification. Residues 511 to 881 (GGTLNRKHIS…IDNDTESTAL (371 aa)) are disordered. Residues 592-617 (RNNSQIASGQNQPQAAAGSHQLSMGQ) show a composition bias toward polar residues. A compositionally biased stretch (pro residues) spans 637–650 (APAPPKPGNPPPGH). Over residues 653 to 664 (GQSSSGTSQHPP) the composition is skewed to low complexity. The span at 665 to 678 (SLSPKPPTRSPSPP) shows a compositional bias: pro residues. Thr-679 and Thr-682 each carry phosphothreonine. Over residues 679 to 698 (TQHTGQPPGQPSAPSQLSAP) the composition is skewed to low complexity. Phosphoserine is present on residues Ser-702 and Ser-704. Pro residues-rich tracts occupy residues 712 to 721 (NHPPPQPPTQ), 752 to 764 (HTPPQTPTPPSTP), and 806 to 816 (RPSVPPPPQPP). Phosphothreonine is present on residues Thr-753, Thr-757, and Thr-759. The SH3-binding signature appears at 753–766 (TPPQTPTPPSTPPL). The residue at position 762 (Ser-762) is a Phosphoserine. Phosphothreonine is present on Thr-763. A compositionally biased stretch (polar residues) spans 822–844 (GDSSLTNTAPTASKIVTDSNSRV). Residues 845–865 (SEPHRSIFPEMHSDSASKDVP) are compositionally biased toward basic and acidic residues. Residues 872–881 (IDNDTESTAL) are compositionally biased toward acidic residues.

As to quaternary structure, component of a complex whose core is composed of ARHGAP17, AMOT, PALS1, PATJ and PARD3/PAR3. Interacts with NHERF1, FNBP1, TRIP10, CAPZA (CAPZA1, CAPZA2 or CAPZA3), CAPZB, CD2AP and SH3KBP1/CIN85. As to expression, ubiquitously expressed. Expressed at higher level in heart and placenta.

Its subcellular location is the membrane. The protein resides in the cytoplasm. It is found in the cell junction. It localises to the tight junction. Functionally, rho GTPase-activating protein involved in the maintenance of tight junction by regulating the activity of CDC42, thereby playing a central role in apical polarity of epithelial cells. Specifically acts as a GTPase activator for the CDC42 GTPase by converting it to an inactive GDP-bound state. The complex formed with AMOT acts by regulating the uptake of polarity proteins at tight junctions, possibly by deciding whether tight junction transmembrane proteins are recycled back to the plasma membrane or sent elsewhere. Participates in the Ca(2+)-dependent regulation of exocytosis, possibly by catalyzing GTPase activity of Rho family proteins and by inducing the reorganization of the cortical actin filaments. Acts as a GTPase activator in vitro for RAC1. The chain is Rho GTPase-activating protein 17 (ARHGAP17) from Homo sapiens (Human).